We begin with the raw amino-acid sequence, 991 residues long: Integrator complex subunit 8 (991 aa).

The segment covering 1–10 (MSAEAADREA) has biased composition (basic and acidic residues). A disordered region spans residues 1 to 22 (MSAEAADREAATSSRPCTPPQT). Polar residues predominate over residues 11–22 (ATSSRPCTPPQT). The short motif at 24–29 (WFEFLL) is the WFEF motif element. TPR repeat units follow at residues 250-288 (CQGC…VSKI), 319-355 (SQPA…SLPD), 569-602 (VYIL…VTEF), and 829-862 (HSWL…CSDF).

Belongs to the Integrator subunit 8 family. As to quaternary structure, component of the Integrator complex, composed of core subunits INTS1, INTS2, INTS3, INTS4, INTS5, INTS6, INTS7, INTS8, INTS9/RC74, INTS10, INTS11/CPSF3L, INTS12, INTS13, INTS14 and INTS15. The core complex associates with protein phosphatase 2A subunits PPP2CA and PPP2R1A, to form the Integrator-PP2A (INTAC) complex.

Its subcellular location is the nucleus. The protein resides in the chromosome. Component of the integrator complex, a multiprotein complex that terminates RNA polymerase II (Pol II) transcription in the promoter-proximal region of genes. The integrator complex provides a quality checkpoint during transcription elongation by driving premature transcription termination of transcripts that are unfavorably configured for transcriptional elongation: the complex terminates transcription by (1) catalyzing dephosphorylation of the C-terminal domain (CTD) of Pol II subunit POLR2A/RPB1 and SUPT5H/SPT5, (2) degrading the exiting nascent RNA transcript via endonuclease activity and (3) promoting the release of Pol II from bound DNA. The integrator complex is also involved in terminating the synthesis of non-coding Pol II transcripts, such as enhancer RNAs (eRNAs), small nuclear RNAs (snRNAs), telomerase RNAs and long non-coding RNAs (lncRNAs). Within the integrator complex, INTS8 is required for the recruitment of protein phosphatase 2A (PP2A) to transcription pause-release checkpoint. This is Integrator complex subunit 8 (ints8) from Xenopus laevis (African clawed frog).